Reading from the N-terminus, the 524-residue chain is MISPFLVLAIGTCLTNSFVPEKERDPSYWRQQAQETLKNALKLQKLNTNVAKNVIMFLGDGMGVSTVTAARILKGQLHHNTGEETRLEMDKFPFVALSKTYNTNAQVPDSAGTATAYLCGVKANEGTVGVSAATERTRCNTTQGNEVTSILRWAKDAGKSVGIVTTTRVNHATPSAAYAHSADRDWYSDNEMPPEALSQGCKDIAYQLMHNIKDIDVIMGGGRKYMYPKNRTDVEYELDEKARGTRLDGLDLISIWKSFKPRHKHSHYVWNRTELLALDPSRVDYLLGLFEPGDMQYELNRNNLTDPSLSEMVEVALRILTKNLKGFFLLVEGGRIDHGHHEGKAKQALHEAVEMDQAIGKAGAMTSQKDTLTVVTADHSHVFTFGGYTPRGNSIFGLAPMVSDTDKKPFTAILYGNGPGYKVVDGERENVSMVDYAHNNYQAQSAVPLRHETHGGEDVAVFAKGPMAHLLHGVHEQNYIPHVMAYASCIGANLDHCAWAGSGSAPSPGALLLPLAVLSLRTLF.

A signal peptide spans 1-17; that stretch reads MISPFLVLAIGTCLTNS. Asp60 is a binding site for Mg(2+). Residues Asp60 and Ser110 each coordinate Zn(2+). Residue Ser110 is the Phosphoserine intermediate of the active site. Ser110 carries the phosphoserine modification. Cysteines 139 and 201 form a disulfide. Asn140 carries N-linked (GlcNAc...) asparagine glycosylation. Thr173 lines the Mg(2+) pocket. The N-linked (GlcNAc...) asparagine glycan is linked to Asn230. Glu235 lines the Ca(2+) pocket. Residue Asn271 is glycosylated (N-linked (GlcNAc...) asparagine). Ca(2+)-binding residues include Phe290 and Glu291. An N-linked (GlcNAc...) asparagine glycan is attached at Asn303. Asp306 provides a ligand contact to Ca(2+). Residue Glu332 participates in Mg(2+) binding. The Zn(2+) site is built by Asp337, His341, Asp378, and His379. The N-linked (GlcNAc...) asparagine glycan is linked to Asn430. Residue His454 coordinates Zn(2+). Cys489 and Cys497 are oxidised to a cystine. Gly501 is lipidated: GPI-anchor amidated glycine. The propeptide at 502 to 524 is removed in mature form; that stretch reads SGSAPSPGALLLPLAVLSLRTLF.

This sequence belongs to the alkaline phosphatase family. As to quaternary structure, homodimer. Mg(2+) is required as a cofactor. It depends on Zn(2+) as a cofactor. The cofactor is Ca(2+). Post-translationally, N-glycosylated. In terms of tissue distribution, widely expressed. Expressed in DRG neurons and spinal cord neurons.

It is found in the cell membrane. The protein resides in the extracellular vesicle membrane. Its subcellular location is the mitochondrion membrane. The protein localises to the mitochondrion intermembrane space. The catalysed reaction is a phosphate monoester + H2O = an alcohol + phosphate. The enzyme catalyses diphosphate + H2O = 2 phosphate + H(+). It catalyses the reaction pyridoxal 5'-phosphate + H2O = pyridoxal + phosphate. It carries out the reaction phosphoethanolamine + H2O = ethanolamine + phosphate. The catalysed reaction is N-phosphocreatine + H2O = creatine + phosphate. The enzyme catalyses ATP + H2O = ADP + phosphate + H(+). It catalyses the reaction ADP + H2O = AMP + phosphate + H(+). It carries out the reaction AMP + H2O = adenosine + phosphate. Phosphatase activity is specifically inhibited by 5-((5-chloro-2-methoxyphenyl)sulfonamido)nicotinamide (SBI-425). In terms of biological role, alkaline phosphatase that metabolizes various phosphate compounds and plays a key role in skeletal mineralization and adaptive thermogenesis. Has broad substrate specificity and can hydrolyze a considerable variety of compounds: however, only a few substrates, such as diphosphate (inorganic pyrophosphate; PPi), pyridoxal 5'-phosphate (PLP) and N-phosphocreatine are natural substrates. Plays an essential role in skeletal and dental mineralization via its ability to hydrolyze extracellular diphosphate, a potent mineralization inhibitor, to phosphate: it thereby promotes hydroxyapatite crystal formation and increases inorganic phosphate concentration. Acts in a non-redundant manner with PHOSPHO1 in skeletal mineralization: while PHOSPHO1 mediates the initiation of hydroxyapatite crystallization in the matrix vesicles (MVs), ALPL/TNAP catalyzes the spread of hydroxyapatite crystallization in the extracellular matrix. Also promotes dephosphorylation of osteopontin (SSP1), an inhibitor of hydroxyapatite crystallization in its phosphorylated state; it is however unclear whether ALPL/TNAP mediates SSP1 dephosphorylation via a direct or indirect manner. Catalyzes dephosphorylation of PLP to pyridoxal (PL), the transportable form of vitamin B6, in order to provide a sufficient amount of PLP in the brain, an essential cofactor for enzymes catalyzing the synthesis of diverse neurotransmitters. Additionally, also able to mediate ATP degradation in a stepwise manner to adenosine, thereby regulating the availability of ligands for purinergic receptors. Also capable of dephosphorylating microbial products, such as lipopolysaccharides (LPS) as well as other phosphorylated small-molecules, such as poly-inosine:cytosine (poly I:C). Acts as a key regulator of adaptive thermogenesis as part of the futile creatine cycle: localizes to the mitochondria of thermogenic fat cells and acts by mediating hydrolysis of N-phosphocreatine to initiate a futile cycle of creatine dephosphorylation and phosphorylation. During the futile creatine cycle, creatine and N-phosphocreatine are in a futile cycle, which dissipates the high energy charge of N-phosphocreatine as heat without performing any mechanical or chemical work. This Mus musculus (Mouse) protein is Alkaline phosphatase, tissue-nonspecific isozyme.